A 509-amino-acid chain; its full sequence is MDIRAAEISAILKDQIKNFGKEAEVSEVGQVLSVGDGIARVYGLDNVQAGEMVEFPGGIRGMALNLESDNVGVVIFGSDRDIKEGDTVKRTGAIVDVPVGPELLGRVVDALGNPIDGKGPINATRRSRVDIKAPGIIPRKSVHEPMSTGLKAIDALIPVGRGQRELVIGDRQTGKTAILLDAFLNQKAIHDNGPEGEKLYCVYVAIGQKRSTVAQFVKVLEERGALKYSIIVAATASDPAPMQYLAPFAGCAMGEYFRDNGMHALIGYDDLSKQAVSYRQMSLLLRRPPGREAYPGDVFYLHSRLLERAAKMNDDMGAGSLTALPVIETQGNDVSAFIPTNVISITDGQIFLETDLFYQGIRPAVNVGLSVSRVGSAAQIKAMKQVAGSIKGELAQYREMAAFAQFGSDLDAATQRLLNRGARLTELLKQPQFSPLKTEEQVAVIFAGVNGYLDKLPVASVGKFEQGFLSYLRSEGSAILDAIRTEKAISDDTRGKLTAALDSFAKSFS.

An ATP-binding site is contributed by 169 to 176; sequence GDRQTGKT.

This sequence belongs to the ATPase alpha/beta chains family. As to quaternary structure, F-type ATPases have 2 components, CF(1) - the catalytic core - and CF(0) - the membrane proton channel. CF(1) has five subunits: alpha(3), beta(3), gamma(1), delta(1), epsilon(1). CF(0) has three main subunits: a(1), b(2) and c(9-12). The alpha and beta chains form an alternating ring which encloses part of the gamma chain. CF(1) is attached to CF(0) by a central stalk formed by the gamma and epsilon chains, while a peripheral stalk is formed by the delta and b chains.

The protein resides in the cell inner membrane. It catalyses the reaction ATP + H2O + 4 H(+)(in) = ADP + phosphate + 5 H(+)(out). Functionally, produces ATP from ADP in the presence of a proton gradient across the membrane. The alpha chain is a regulatory subunit. In Rhizobium johnstonii (strain DSM 114642 / LMG 32736 / 3841) (Rhizobium leguminosarum bv. viciae), this protein is ATP synthase subunit alpha.